We begin with the raw amino-acid sequence, 415 residues long: Adenosylhomocysteinase (415 aa).

Substrate contacts are provided by threonine 53, aspartate 124, and glutamate 147. NAD(+) is bound at residue 148–150; it reads TTT. Substrate contacts are provided by lysine 177 and aspartate 181. NAD(+) contacts are provided by residues asparagine 182, 211-216, glutamate 234, asparagine 269, 290-292, and asparagine 337; these read GYGWVG and SGH.

Belongs to the adenosylhomocysteinase family. The cofactor is NAD(+).

Its subcellular location is the cytoplasm. It carries out the reaction S-adenosyl-L-homocysteine + H2O = L-homocysteine + adenosine. The protein operates within amino-acid biosynthesis; L-homocysteine biosynthesis; L-homocysteine from S-adenosyl-L-homocysteine: step 1/1. May play a key role in the regulation of the intracellular concentration of adenosylhomocysteine. The protein is Adenosylhomocysteinase of Sulfolobus acidocaldarius (strain ATCC 33909 / DSM 639 / JCM 8929 / NBRC 15157 / NCIMB 11770).